A 967-amino-acid chain; its full sequence is uncharacterized protein (967 aa).

A signal peptide spans 1 to 29 (MKKKLKSVLIWFLIFTFNLSLGSFREVFA). BIG2 domains are found at residues 38–107 (TAIT…QDGS) and 133–190 (LPVG…VNDG).

This is an uncharacterized protein from Clostridium acetobutylicum (strain ATCC 824 / DSM 792 / JCM 1419 / IAM 19013 / LMG 5710 / NBRC 13948 / NRRL B-527 / VKM B-1787 / 2291 / W).